The chain runs to 512 residues: Cytochrome P450 monooxygenase astB (512 aa).

Residues 5-25 (DLSFPAAIGAVFGAVAISVAA) traverse the membrane as a helical segment. Cys452 provides a ligand contact to heme.

This sequence belongs to the cytochrome P450 family. Heme serves as cofactor.

Its subcellular location is the membrane. It functions in the pathway secondary metabolite biosynthesis; terpenoid biosynthesis. Functionally, cytochrome P450 monooxygenase; part of the gene cluster that mediates the biosynthesis of the sesquiterpenoid aspterric acid (AA), an inhibitor of dihydroxy-acid dehydratase (DHAD) effective as an herbicide. AstB catalyzes the second step within the pathway and converts (-)-daucane produced by the terpene cyclase astA into an alpha-epoxy carboxylate intermediate which is further converted into the tricyclic aspterric acid by the cytochrome P450 monooxygenase astC. This Aspergillus terreus (strain NIH 2624 / FGSC A1156) protein is Cytochrome P450 monooxygenase astB.